A 95-amino-acid polypeptide reads, in one-letter code: Cobalt transport protein CbiN (95 aa).

Helical transmembrane passes span His5 to Gly25 and Leu67 to Tyr87.

This sequence belongs to the CbiN family. In terms of assembly, forms an energy-coupling factor (ECF) transporter complex composed of an ATP-binding protein (A component, CbiO), a transmembrane protein (T component, CbiQ) and 2 possible substrate-capture proteins (S components, CbiM and CbiN) of unknown stoichimetry.

The protein localises to the cell membrane. Its pathway is cofactor biosynthesis; adenosylcobalamin biosynthesis. Its function is as follows. Part of the energy-coupling factor (ECF) transporter complex CbiMNOQ involved in cobalt import. The sequence is that of Cobalt transport protein CbiN from Methanocaldococcus jannaschii (strain ATCC 43067 / DSM 2661 / JAL-1 / JCM 10045 / NBRC 100440) (Methanococcus jannaschii).